An 89-amino-acid chain; its full sequence is UPF0213 protein LSEI_1587 (89 aa).

The GIY-YIG domain maps to 4-79 (KTYYFYVLLC…KHQTRHRKEV (76 aa)).

Belongs to the UPF0213 family.

The chain is UPF0213 protein LSEI_1587 from Lacticaseibacillus paracasei (strain ATCC 334 / BCRC 17002 / CCUG 31169 / CIP 107868 / KCTC 3260 / NRRL B-441) (Lactobacillus paracasei).